A 153-amino-acid polypeptide reads, in one-letter code: Small ribosomal subunit protein uS19 (153 aa).

The interval 1-63 (MGFRGAWNKR…QEIWDEFRAF (63 aa)) is unknown. Positions 64–153 (VNKKAWVDPK…EKSAKVVKKK (90 aa)) are small ribosomal subunit protein uS19.

This sequence belongs to the universal ribosomal protein uS19 family.

In terms of biological role, protein S19 forms a complex with S13 that binds strongly to the 16S ribosomal RNA. This Hydrogenobaculum sp. (strain Y04AAS1) protein is Small ribosomal subunit protein uS19.